The sequence spans 530 residues: Fusaric acid resistance protein FusA (530 aa).

Residues 1–23 (MQSPATKGTLALAVLAVSLIMAG) form the signal peptide. C24 carries the N-palmitoyl cysteine lipid modification. C24 carries S-diacylglycerol cysteine lipidation. Disordered regions lie at residues 375 to 442 (NAGV…RQRA) and 476 to 530 (GVET…PAAR). Composition is skewed to low complexity over residues 421–430 (RPQLPAVARR) and 494–530 (AAGA…PAAR).

This sequence belongs to the outer membrane factor (OMF) (TC 1.B.17) family.

Its subcellular location is the cell membrane. Its function is as follows. Involved in the resistance (detoxification) of the fungal toxin fusaric acid. This chain is Fusaric acid resistance protein FusA (fusA), found in Burkholderia cepacia (Pseudomonas cepacia).